Reading from the N-terminus, the 306-residue chain is tRNA pseudouridine synthase B (306 aa).

Asp-38 serves as the catalytic Nucleophile.

It belongs to the pseudouridine synthase TruB family. Type 1 subfamily.

It catalyses the reaction uridine(55) in tRNA = pseudouridine(55) in tRNA. In terms of biological role, responsible for synthesis of pseudouridine from uracil-55 in the psi GC loop of transfer RNAs. In Syntrophotalea carbinolica (strain DSM 2380 / NBRC 103641 / GraBd1) (Pelobacter carbinolicus), this protein is tRNA pseudouridine synthase B.